The primary structure comprises 204 residues: Ras-related protein R-Ras2 (204 aa).

Ala2 carries the N-acetylalanine modification. Position 21-29 (21-29 (GGGGVGKSA)) interacts with GTP. Residues 43 to 51 (YDPTIEDSY) carry the Effector region motif. GTP-binding positions include 68-72 (DTAGQ), 127-130 (NKAD), and 157-159 (SAK). Ser186 carries the phosphoserine modification. N6-palmitoyl lysine attachment occurs at residues Lys192, Lys194, Lys196, and Lys197. Cys199 is lipidated: S-palmitoyl cysteine. Cys201 carries the cysteine methyl ester modification. The S-farnesyl cysteine moiety is linked to residue Cys201. The propeptide at 202 to 204 (VIF) is removed in mature form.

The protein belongs to the small GTPase superfamily. Ras family. Interacts with RASSF5. In terms of processing, may be post-translationally modified by both palmitoylation and polyisoprenylation. Post-translationally, fatty-acylation at Lys-192, Lys-194; lys-196 and Lys-197 is required for localization to the plasma membrane and activity. Defatty-acylated by SIRT6, affecting its localization to the plasma membrane. As to expression, ubiquitously present in all tissues examined, with the highest levels in heart, placenta, and skeletal muscle. Moderate levels in lung and liver; low levels in brain, kidney, and pancreas.

It is found in the cell membrane. The protein localises to the golgi apparatus membrane. The catalysed reaction is GTP + H2O = GDP + phosphate + H(+). GTP-binding protein with GTPase activity, involved in the regulation of MAPK signaling pathway and thereby controlling multiple cellular processes. Regulates craniofacial development. This Homo sapiens (Human) protein is Ras-related protein R-Ras2.